Here is a 1060-residue protein sequence, read N- to C-terminus: MDWHSFRIAALLLTSLVVLEVNSEFQIQVRDHNAKNGTIKWHSIRRQKREWIKFAAACREGEDNSKRNPIAKIHSDCAANQPVTYRISGVGIDQPPYGIFIINQKTGEINITSIVDREVTPFFIIYCRALNAQGQDLENPLELRVRVMDINDNPPVFSMTTFLGQIEENSNANTLVMKLNATDADEPNNLNSMIAFKIIRQEPSDSPMFIINRKTGEIRTMNNFLDREQYSQYSLVVRGSDRDGGADGMSAESECSITILDVNDNIPYLEQSSYDIEIEENALHSQLVQIRVIDLDEEFSDNWKAIIFFISGNEGNWFEIEMNERTNVGTLKVVKPLDYEAMKNLQLSIGVRNVAEFHQSIISQYRLTATMVTVTVLNVIEGSVFRPGSKTFVVDSRMEANHRVGEFVATDLDTGRASTNVRYEMGNNPENLLVVDSRTGIITLRNRVTMEQYQRLNGEYKGTVLSIDDSLQRTCTGTIVIELSGTGWVPGSDGGGSSSGSGGNRDPVTNGYQGTSTVGPQRVTGSGGVTSSGGGSGVNNTPGRQNPLDEPEPEPFDITEDNVHFGPAGIGLLIMGFLVLGLVPFLLICCDCGGAPGGGAGFEPVPECSDGAIHTWAIEGPQPEPHDGITTICVPQMPPGNANVIEYIDNSGVYTNEYCGREMQDLGGGERTTGFELMDGVKTSAAPEICQEYSGTLRRNSMRECRDGGLNMNFMESYFCQKAYAYADEDEGRPSNDCLLIYDIEGVGSPAGSVGCCSFIGEDLDESFLDTLGPKFKKLADISLGKEIDSYPDPDSSWPPQSTEPMCPQSTEPLGSGYPPISPHFGTTTVISENAYPSGPGVQHPLPIPDPLGYGNVTVRESYATSGTLKPSVHFHDNQQASNVVVTERVVGPVPGADLHGMLEIPDLRDGTNVIVTERVIAPGSSLPTSLTIPNPRETSNVVVTERVIQPTSGMIGNLSMTPELSSAQNVIVTERVVSGAGMSGIAGTAGLGGVGGIGSSGLVSTTMGAAGTGLNMGGTATIGHMRSSSDHHFSQTIGSASPNMARSRITKYSTVQYSK.

The N-terminal stretch at 1-23 is a signal peptide; it reads MDWHSFRIAALLLTSLVVLEVNS. A propeptide spanning residues 24–49 is cleaved from the precursor; the sequence is EFQIQVRDHNAKNGTIKWHSIRRQKR. Cadherin domains follow at residues 50-157, 158-269, 270-389, and 386-493; these read EWIK…PPVF, SMTT…IPYL, EQSS…RPGS, and RPGS…PGSD. Residues 50–567 lie on the Extracellular side of the membrane; sequence EWIKFAAACR…ITEDNVHFGP (518 aa). An N-linked (GlcNAc...) (high mannose) asparagine glycan is attached at Asn110. N-linked (GlcNAc...) asparagine glycosylation occurs at Asn180. The tract at residues 490–560 is disordered; the sequence is PGSDGGGSSS…PEPEPFDITE (71 aa). Residues 492-503 show a composition bias toward gly residues; that stretch reads SDGGGSSSGSGG. Polar residues predominate over residues 510-519; that stretch reads NGYQGTSTVG. The segment covering 525–537 has biased composition (gly residues); it reads GSGGVTSSGGGSG. Residues 549–560 are compositionally biased toward acidic residues; the sequence is DEPEPEPFDITE. A helical membrane pass occupies residues 568-588; it reads AGIGLLIMGFLVLGLVPFLLI. The Cytoplasmic segment spans residues 589–1060; it reads CCDCGGAPGG…TKYSTVQYSK (472 aa). A compositionally biased stretch (low complexity) spans 792–801; that stretch reads PDPDSSWPPQ. Residues 792–811 form a disordered region; that stretch reads PDPDSSWPPQSTEPMCPQST. Desmoglein repeat repeat units lie at residues 835-861, 862-891, 892-921, 922-949, and 950-978; these read AYPSGPGVQHPLPIPDPLGYGNVTVRE, SYATSGTLKPSVHFHDNQQASNVVVTERVV, GPVPGADLHGMLEIPDLRDGTNVIVTERVI, APGSSLPTSLTIPNPRETSNVVVTERVI, and QPTSGMIGNLSMTPELSSAQNVIVTERVV.

In terms of assembly, interacts with DSC3; there is evidence to suggest that the interaction promotes cell-cell adhesion of keratinocytes. Expressed in epidermis.

It is found in the cell membrane. It localises to the cell junction. The protein resides in the desmosome. The protein localises to the cytoplasm. Its subcellular location is the nucleus. Functionally, component of intercellular desmosome junctions. Involved in the interaction of plaque proteins and intermediate filaments mediating cell-cell adhesion. The polypeptide is Desmoglein-1-beta (Dsg1b) (Mus musculus (Mouse)).